Reading from the N-terminus, the 321-residue chain is D-alanine--D-alanine ligase (321 aa).

The 195-residue stretch at 121–315 folds into the ATP-grasp domain; that stretch reads RSCFLKNNIN…FTNLIEEIIK (195 aa). 148–199 is an ATP binding site; that stretch reads MKRPYVIKPLKQGSSIGVEVIFEEDDFHFIDYDFPYGEDIIIEQYIQGQELQ. The Mg(2+) site is built by Glu268, Glu282, and Asn284.

It belongs to the D-alanine--D-alanine ligase family. Mg(2+) serves as cofactor. Mn(2+) is required as a cofactor.

The protein resides in the cytoplasm. The enzyme catalyses 2 D-alanine + ATP = D-alanyl-D-alanine + ADP + phosphate + H(+). It functions in the pathway cell wall biogenesis; peptidoglycan biosynthesis. In terms of biological role, cell wall formation. The protein is D-alanine--D-alanine ligase of Rickettsia typhi (strain ATCC VR-144 / Wilmington).